A 491-amino-acid chain; its full sequence is MTALLDTFVSKIIENSDYAELDATYLSNRILALVGEDNAQQDTNQSNLIALKDELVDLAVVNGKVGDLAEEKDCLGAELMNFITPIPSQVNKAFWDTNAKSPQKAIKDFYELSKRNNYIKVTAIAKNIAFTTSSVYGDIDITINLSKPEKDPKAIAAAKLAKTSNYPKCQLCMENEGYQGRINYPARANHRIIRMNLGDEKWGFQYSPYAYFNEHCIFLNTEHVPMVISQNTFRQLLDIVDIFPGYFAGSNSDLPIVGGSILSHNHYQGGRHIFPMEIAELDSVFRFKDFPDVTAGIVKWPMSVIRLRGANKYSLVELAEIIRLAWRNYSDDTMNILAFTGDTPHHTVTPIARKRDGQFELDIVLRDNHTTAEYPDGVYHPHIDVQHIKKENIGLIEVMGLAILPPRLKKELAEVEKYVLNQYNEMADYHKDWADAIKASHPETSSETVSEIVKQAVGRTFVRVLEDAGVYKRNRQGQAAFMRFVESIGVK.

It belongs to the galactose-1-phosphate uridylyltransferase type 2 family.

The protein resides in the cytoplasm. The catalysed reaction is alpha-D-galactose 1-phosphate + UDP-alpha-D-glucose = alpha-D-glucose 1-phosphate + UDP-alpha-D-galactose. It functions in the pathway carbohydrate metabolism; galactose metabolism. This Streptococcus mutans serotype c (strain ATCC 700610 / UA159) protein is Galactose-1-phosphate uridylyltransferase (galT).